A 1157-amino-acid chain; its full sequence is uncharacterized protein (1157 aa).

The span at 1–10 (MDPHWKRHDS) shows a compositional bias: basic and acidic residues. Disordered regions lie at residues 1-35 (MDPH…QRFG), 159-233 (QTTP…SVEP), and 478-498 (KNQS…GKGP). 2 stretches are compositionally biased toward low complexity: residues 18–31 (SPSA…PSSA) and 181–197 (SAGT…NPNF). Residues 208 to 228 (QEWQQSPLESPLSMHSLQESL) are compositionally biased toward polar residues. In terms of domain architecture, CSD2 spans 501–574 (VWFKPSDKRI…KVEYKAILHD (74 aa)). An RNB domain is found at 608–921 (LRDKLTFMIG…ICVQRQLREA (314 aa)). The DIS3L2 C-terminal domain maps to 973 to 1030 (GLVKHKAFVLAVDQEYIDIVIYEFGLERRISLDLLPLSNCDFNEQKHELYLSWRTNAS). A disordered region spans residues 1084-1113 (YSKARGNDSTSKTAKSSSGNQDISGDGKLH). Residues 1090–1106 (NDSTSKTAKSSSGNQDI) are compositionally biased toward polar residues.

This sequence belongs to the RNR ribonuclease family.

It is found in the cytoplasm. This is an uncharacterized protein from Schizosaccharomyces pombe (strain 972 / ATCC 24843) (Fission yeast).